We begin with the raw amino-acid sequence, 465 residues long: Neuraminidase (465 aa).

Residues 1–11 (MLPSTIQTLTL) are Intravirion-facing. Residues 12-34 (FLTSGGVLLSLYVSASLSYLLYS) form a helical membrane-spanning segment. Residues 13-35 (LTSGGVLLSLYVSASLSYLLYSD) form an involved in apical transport and lipid raft association region. The Virion surface portion of the chain corresponds to 35-465 (DILLKFSSKI…DTVTGVDMAL (431 aa)). Residues 38 to 85 (LKFSSKITAPTMTLDCANASNVQAVNRSATKEMTFLLPEPEWTYPRLS) are hypervariable stalk region. N-linked (GlcNAc...) asparagine; by host glycans are attached at residues Asn55 and Asn63. Disulfide bonds link Cys86/Cys419, Cys121/Cys126, Cys181/Cys228, Cys230/Cys235, Cys276/Cys290, Cys278/Cys288, Cys317/Cys336, and Cys423/Cys446. The segment at 88 to 465 (GSTFQKALLI…DTVTGVDMAL (378 aa)) is head of neuraminidase. A substrate-binding site is contributed by Arg115. Asn143 carries N-linked (GlcNAc...) asparagine; by host glycosylation. Asp148 acts as the Proton donor/acceptor in catalysis. Arg149 serves as a coordination point for substrate. A substrate-binding site is contributed by 274–275 (EE). Asn283 carries an N-linked (GlcNAc...) asparagine; by host glycan. Position 291 (Arg291) interacts with substrate. Asp292, Thr296, Asp323, Gly343, and Gly345 together coordinate Ca(2+). Arg373 contacts substrate. Tyr408 (nucleophile) is an active-site residue.

It belongs to the glycosyl hydrolase 34 family. In terms of assembly, homotetramer. Requires Ca(2+) as cofactor. In terms of processing, N-glycosylated.

It localises to the virion membrane. The protein resides in the host apical cell membrane. The catalysed reaction is Hydrolysis of alpha-(2-&gt;3)-, alpha-(2-&gt;6)-, alpha-(2-&gt;8)- glycosidic linkages of terminal sialic acid residues in oligosaccharides, glycoproteins, glycolipids, colominic acid and synthetic substrates.. With respect to regulation, inhibited by the neuraminidase inhibitors zanamivir (Relenza) and oseltamivir (Tamiflu). These drugs interfere with the release of progeny virus from infected cells and are effective against all influenza strains. Resistance to neuraminidase inhibitors is quite rare. Catalyzes the removal of terminal sialic acid residues from viral and cellular glycoconjugates. Cleaves off the terminal sialic acids on the glycosylated HA during virus budding to facilitate virus release. Additionally helps virus spread through the circulation by further removing sialic acids from the cell surface. These cleavages prevent self-aggregation and ensure the efficient spread of the progeny virus from cell to cell. Otherwise, infection would be limited to one round of replication. Described as a receptor-destroying enzyme because it cleaves a terminal sialic acid from the cellular receptors. May facilitate viral invasion of the upper airways by cleaving the sialic acid moieties on the mucin of the airway epithelial cells. Likely to plays a role in the budding process through its association with lipid rafts during intracellular transport. May additionally display a raft-association independent effect on budding. Plays a role in the determination of host range restriction on replication and virulence. Sialidase activity in late endosome/lysosome traffic seems to enhance virus replication. The chain is Neuraminidase from Influenza B virus (strain B/Beijing/1/1987).